A 353-amino-acid chain; its full sequence is Purine nucleoside phosphorylase (353 aa).

The span at 1–16 (MSKFSYLQNGKASTNG) shows a compositional bias: polar residues. The interval 1 to 42 (MSKFSYLQNGKASTNGVPHANGHHQQHQNGHSNGVARNGGTA) is disordered. Phosphate-binding positions include Ser-98, His-129, 149 to 151 (RFH), and Ala-181. Glu-266 serves as a coordination point for a purine D-ribonucleoside. Phosphate is bound at residue Ser-285. Residue Asn-308 participates in a purine D-ribonucleoside binding.

This sequence belongs to the PNP/MTAP phosphorylase family. In terms of assembly, homotrimer.

The enzyme catalyses inosine + phosphate = alpha-D-ribose 1-phosphate + hypoxanthine. It carries out the reaction guanosine + phosphate = alpha-D-ribose 1-phosphate + guanine. It catalyses the reaction 2'-deoxyguanosine + phosphate = 2-deoxy-alpha-D-ribose 1-phosphate + guanine. The catalysed reaction is 2'-deoxyinosine + phosphate = 2-deoxy-alpha-D-ribose 1-phosphate + hypoxanthine. It functions in the pathway purine metabolism; purine nucleoside salvage. Its activity is regulated as follows. Inhibited by 5'-deaza-1'-aza-2c-deoxy-1'-(9-methylene) immucillin-H (DADMe-ImmH). As part of the purine salvage pathway, catalyzes the phosphorolytic breakdown of the N-glycosidic bond in the beta-(deoxy)ribonucleoside molecules, with the formation of the corresponding free purine bases and pentose-1-phosphate. Preferentially acts on 2'-deoxyinosine and inosine, and to a lesser extent on 2'-deoxyguanosine and guanosine. Has no activity towards adenosine or 2'-deoxyadenosine. This Anopheles gambiae (African malaria mosquito) protein is Purine nucleoside phosphorylase.